The primary structure comprises 98 residues: Large ribosomal subunit protein uL23 (98 aa).

It belongs to the universal ribosomal protein uL23 family. As to quaternary structure, part of the 50S ribosomal subunit. Contacts protein L29, and trigger factor when it is bound to the ribosome.

Functionally, one of the early assembly proteins it binds 23S rRNA. One of the proteins that surrounds the polypeptide exit tunnel on the outside of the ribosome. Forms the main docking site for trigger factor binding to the ribosome. This chain is Large ribosomal subunit protein uL23, found in Halorhodospira halophila (strain DSM 244 / SL1) (Ectothiorhodospira halophila (strain DSM 244 / SL1)).